A 35-amino-acid chain; its full sequence is Cytochrome b6-f complex subunit 5 (35 aa).

A helical membrane pass occupies residues 5-25 (LLTGIVLGSIFITLLGLLAAA).

This sequence belongs to the PetG family. In terms of assembly, the 4 large subunits of the cytochrome b6-f complex are cytochrome b6, subunit IV (17 kDa polypeptide, PetD), cytochrome f and the Rieske protein, while the 4 small subunits are PetG, PetL, PetM and PetN. The complex functions as a dimer.

It localises to the plastid. The protein localises to the chloroplast thylakoid membrane. Its function is as follows. Component of the cytochrome b6-f complex, which mediates electron transfer between photosystem II (PSII) and photosystem I (PSI), cyclic electron flow around PSI, and state transitions. PetG is required for either the stability or assembly of the cytochrome b6-f complex. In Cyanidium caldarium (Red alga), this protein is Cytochrome b6-f complex subunit 5.